The chain runs to 432 residues: 3-phosphoshikimate 1-carboxyvinyltransferase (432 aa).

3-phosphoshikimate is bound by residues Lys23, Ser24, and Arg28. A phosphoenolpyruvate-binding site is contributed by Lys23. Phosphoenolpyruvate-binding residues include Gly99 and Arg127. Residues Ser172, Ser173, Gln174, Ser200, Asp317, Asn341, and Lys345 each coordinate 3-phosphoshikimate. Position 174 (Gln174) interacts with phosphoenolpyruvate. Residue Asp317 is the Proton acceptor of the active site. Residues Arg349, Arg391, and Lys416 each coordinate phosphoenolpyruvate.

It belongs to the EPSP synthase family. Monomer.

It is found in the cytoplasm. The enzyme catalyses 3-phosphoshikimate + phosphoenolpyruvate = 5-O-(1-carboxyvinyl)-3-phosphoshikimate + phosphate. It participates in metabolic intermediate biosynthesis; chorismate biosynthesis; chorismate from D-erythrose 4-phosphate and phosphoenolpyruvate: step 6/7. Catalyzes the transfer of the enolpyruvyl moiety of phosphoenolpyruvate (PEP) to the 5-hydroxyl of shikimate-3-phosphate (S3P) to produce enolpyruvyl shikimate-3-phosphate and inorganic phosphate. The sequence is that of 3-phosphoshikimate 1-carboxyvinyltransferase from Blochmanniella pennsylvanica (strain BPEN).